Consider the following 588-residue polypeptide: Probable basic-leucine zipper transcription factor M (588 aa).

A coiled-coil region spans residues 127–157; sequence QVEQQQEQEQEQEQQQKQQQQQYIEKQIQEI. A compositionally biased stretch (low complexity) spans 221–240; it reads QQNHIDNQSLNNSNTKTSKN. A disordered region spans residues 221–250; the sequence is QQNHIDNQSLNNSNTKTSKNQQKDNNLPKK. The bZIP domain occupies 263–326; it reads NNNNIEKKRD…GSNLMRPEPE (64 aa). The tract at residues 269–289 is basic motif; that stretch reads KKRDQTESSKNFREKKKEYVK. Residues 291 to 312 are leucine-zipper; it reads IESKILALTLENDKLKKENDSL.

The protein belongs to the bZIP family.

The protein localises to the nucleus. Functionally, probable transcriptional regulator. The chain is Probable basic-leucine zipper transcription factor M (bzpM) from Dictyostelium discoideum (Social amoeba).